The primary structure comprises 291 residues: Elongation factor Ts (291 aa).

Residues 80–83 (TDFV) form an involved in Mg(2+) ion dislocation from EF-Tu region.

Belongs to the EF-Ts family.

It localises to the cytoplasm. Its function is as follows. Associates with the EF-Tu.GDP complex and induces the exchange of GDP to GTP. It remains bound to the aminoacyl-tRNA.EF-Tu.GTP complex up to the GTP hydrolysis stage on the ribosome. This Ligilactobacillus salivarius (strain UCC118) (Lactobacillus salivarius) protein is Elongation factor Ts.